A 515-amino-acid chain; its full sequence is Fatty acyl-CoA reductase 1 (515 aa).

At 1–465 the chain is on the cytoplasmic side; that stretch reads MVSIPEYYEG…ARKHLNKLRN (465 aa). Positions 451 to 507 are necessary and sufficient for PEX19-mediated localization into peroxisome membrane; the sequence is SGLPAARKHLNKLRNIRYGFNTILVILIWRIFIARSQMARNIWYFVVSLCYKFLSYF. A helical transmembrane segment spans residues 466–483; that stretch reads IRYGFNTILVILIWRIFI. The Peroxisomal portion of the chain corresponds to 484–515; that stretch reads ARSQMARNIWYFVVSLCYKFLSYFRASSTMRY.

Belongs to the fatty acyl-CoA reductase family. In terms of assembly, interacts with PEX19; PEX19 mediates the targeting of FAR1 to peroxisomes. As to expression, widely expressed. Expressed in all tissues examined. Highest expression seen in preputial gland. Expressed in the brain where large quantities of ether lipids are synthesized.

Its subcellular location is the peroxisome membrane. The catalysed reaction is a long-chain fatty acyl-CoA + 2 NADPH + 2 H(+) = a long-chain primary fatty alcohol + 2 NADP(+) + CoA. It catalyses the reaction hexadecanoyl-CoA + 2 NADPH + 2 H(+) = hexadecan-1-ol + 2 NADP(+) + CoA. The enzyme catalyses octadecanoyl-CoA + 2 NADPH + 2 H(+) = octadecan-1-ol + 2 NADP(+) + CoA. It carries out the reaction (9Z)-octadecenoyl-CoA + 2 NADPH + 2 H(+) = (9Z)-octadecen-1-ol + 2 NADP(+) + CoA. The catalysed reaction is (9Z,12Z)-octadecadienoyl-CoA + 2 NADPH + 2 H(+) = (9Z,12Z)-octadecadien-1-ol + 2 NADP(+) + CoA. It catalyses the reaction eicosanoyl-CoA + 2 NADPH + 2 H(+) = eicosan-1-ol + 2 NADP(+) + CoA. The enzyme catalyses 16-methylheptadecanoyl-CoA + 2 NADPH + 2 H(+) = 16-methylheptadecan-1-ol + 2 NADP(+) + CoA. It carries out the reaction 18-methylnonadecanoyl-CoA + 2 NADPH + 2 H(+) = 18-methylnonadecan-1-ol + 2 NADP(+) + CoA. In terms of biological role, catalyzes the reduction of saturated and unsaturated C16 or C18 fatty acyl-CoA to fatty alcohols. It plays an essential role in the production of ether lipids/plasmalogens which synthesis requires fatty alcohols. In parallel, it is also required for wax monoesters production since fatty alcohols also constitute a substrate for their synthesis. The protein is Fatty acyl-CoA reductase 1 of Mus musculus (Mouse).